The chain runs to 190 residues: Signal peptidase I W (190 aa).

Residues 4–24 traverse the membrane as a helical segment; the sequence is ISNILYVIIFTLIIVLTLVVI. Serine 45 is a catalytic residue. Residues 143-163 traverse the membrane as a helical segment; it reads PIGTAVLLIVPGVMLLVYAFV.

It belongs to the peptidase S26B family.

Its subcellular location is the cell membrane. It catalyses the reaction Cleavage of hydrophobic, N-terminal signal or leader sequences from secreted and periplasmic proteins.. Required for the cleavage of the signal sequence of TasA and TapA, which are involved in biofilm formation. The polypeptide is Signal peptidase I W (Bacillus subtilis (strain 168)).